We begin with the raw amino-acid sequence, 182 residues long: Dynactin subunit 5 (182 aa).

Met-1 is subject to N-acetylmethionine.

It belongs to the dynactin subunits 5/6 family. Dynactin subunit 5 subfamily. As to quaternary structure, subunit of dynactin, a multiprotein complex part of a tripartite complex with dynein and a adapter, such as BICDL1, BICD2 or HOOK3. The dynactin complex is built around ACTR1A/ACTB filament and consists of an actin-related filament composed of a shoulder domain, a pointed end and a barbed end. Its length is defined by its flexible shoulder domain. The soulder is composed of 2 DCTN1 subunits, 4 DCTN2 and 2 DCTN3. The 4 DCNT2 (via N-terminus) bind the ACTR1A filament and act as molecular rulers to determine the length. The pointed end is important for binding dynein-dynactin cargo adapters. Consists of 4 subunits: ACTR10, DCNT4, DCTN5 and DCTN6. Within the complex DCTN6 forms a heterodimer with DCTN5. The barbed end is composed of a CAPZA1:CAPZB heterodimers, which binds ACTR1A/ACTB filament and dynactin and stabilizes dynactin. Interacts with N4BP2L1.

The protein localises to the cytoplasm. It localises to the cytoskeleton. The protein resides in the chromosome. It is found in the centromere. Its subcellular location is the kinetochore. Its function is as follows. Part of the dynactin complex that activates the molecular motor dynein for ultra-processive transport along microtubules. This Homo sapiens (Human) protein is Dynactin subunit 5.